The primary structure comprises 242 residues: DNA repair protein RecO (242 aa).

This sequence belongs to the RecO family.

Functionally, involved in DNA repair and RecF pathway recombination. The polypeptide is DNA repair protein RecO (Laribacter hongkongensis (strain HLHK9)).